Consider the following 498-residue polypeptide: Putative BTB/POZ domain-containing protein L67 (498 aa).

Residues 26–96 (SDINITLSDN…MYGISLSEIN (71 aa)) enclose the BTB domain.

The protein belongs to the mimivirus BTB/WD family.

The sequence is that of Putative BTB/POZ domain-containing protein L67 from Acanthamoeba polyphaga (Amoeba).